A 309-amino-acid polypeptide reads, in one-letter code: MSHWFFIINPTAGHRNGLRVWKSIQKELIKRKVEHRSFLTEHPGHAEVLARQISTIQEYKLKRLIVIGGDGTMHEVVNGLKDVDDIELSFVPAGAYNDFSRGFSIKKIDLIQEIKKVKRPLTRTFHLGSVNFLQDKSQILYFMNHIGIGFDAYVNKKAMEFPLRRVFLFLRLRFLVYPLSHLHASATFKPFTLACTTEDETREFHDVWFAVVSNHPFYGGGMKAAPLANPREKTFDIVIVENQPFLKKYWLLCLMAFGKHTKMDGVTMFKAKDITFYTKDKIPFHADGEIMGTTPFRLASSPSPLRIKT.

A DAGKc domain is found at 1–134; sequence MSHWFFIINP…FHLGSVNFLQ (134 aa). ATP is bound by residues 9 to 13, Thr-40, and 69 to 75; these read NPTAG and GDGTMHE. Residues Asn-229, Glu-232, and Thr-234 each coordinate Mg(2+). Glu-289 serves as the catalytic Proton acceptor.

The protein belongs to the diacylglycerol/lipid kinase family. Mg(2+) is required as a cofactor.

May catalyze the ATP-dependent phosphorylation of lipids other than diacylglycerol (DAG). In fact, is not able to exhibit diacylglycerol kinase activity in vitro. The protein is Putative lipid kinase YtlR (ytlR) of Bacillus subtilis (strain 168).